The primary structure comprises 276 residues: Aldo-keto reductase Mkms_1985 (276 aa).

Y50 functions as the Proton donor in the catalytic mechanism. NADPH-binding residues include L190, I228, K230, S231, V232, R236, S239, and N240. Residues 257–276 (SSLEDGSRLGPDPKTFNFTG) are disordered.

This sequence belongs to the aldo/keto reductase family.

This Mycobacterium sp. (strain KMS) protein is Aldo-keto reductase Mkms_1985.